The sequence spans 362 residues: Adenosine deaminase (362 aa).

Zn(2+) is bound by residues histidine 19 and histidine 21. Substrate-binding residues include histidine 21, aspartate 23, and glycine 181. Histidine 208 provides a ligand contact to Zn(2+). Glutamate 211 acts as the Proton donor in catalysis. Residue aspartate 300 coordinates Zn(2+).

It belongs to the metallo-dependent hydrolases superfamily. Adenosine and AMP deaminases family. Adenosine deaminase subfamily. Zn(2+) is required as a cofactor.

It catalyses the reaction adenosine + H2O + H(+) = inosine + NH4(+). It carries out the reaction 2'-deoxyadenosine + H2O + H(+) = 2'-deoxyinosine + NH4(+). Functionally, catalyzes the hydrolytic deamination of adenosine and 2-deoxyadenosine. This Mycolicibacterium vanbaalenii (strain DSM 7251 / JCM 13017 / BCRC 16820 / KCTC 9966 / NRRL B-24157 / PYR-1) (Mycobacterium vanbaalenii) protein is Adenosine deaminase.